Reading from the N-terminus, the 436-residue chain is 3-phosphoshikimate 1-carboxyvinyltransferase (436 aa).

3-phosphoshikimate contacts are provided by Lys-23, Ser-24, and Arg-28. Lys-23 is a phosphoenolpyruvate binding site. The phosphoenolpyruvate site is built by Gly-97 and Arg-126. 3-phosphoshikimate is bound by residues Ser-171, Gln-173, Asp-323, and Lys-350. Gln-173 contributes to the phosphoenolpyruvate binding site. The Proton acceptor role is filled by Asp-323. Phosphoenolpyruvate-binding residues include Arg-354 and Arg-396.

It belongs to the EPSP synthase family. As to quaternary structure, monomer.

The protein localises to the cytoplasm. The catalysed reaction is 3-phosphoshikimate + phosphoenolpyruvate = 5-O-(1-carboxyvinyl)-3-phosphoshikimate + phosphate. Its pathway is metabolic intermediate biosynthesis; chorismate biosynthesis; chorismate from D-erythrose 4-phosphate and phosphoenolpyruvate: step 6/7. In terms of biological role, catalyzes the transfer of the enolpyruvyl moiety of phosphoenolpyruvate (PEP) to the 5-hydroxyl of shikimate-3-phosphate (S3P) to produce enolpyruvyl shikimate-3-phosphate and inorganic phosphate. The protein is 3-phosphoshikimate 1-carboxyvinyltransferase of Prochlorococcus marinus (strain MIT 9301).